The chain runs to 295 residues: Acetylglutamate kinase (295 aa).

Residues 66–67, arginine 88, and asparagine 193 each bind substrate; that span reads GG.

Belongs to the acetylglutamate kinase family. ArgB subfamily.

It is found in the cytoplasm. It catalyses the reaction N-acetyl-L-glutamate + ATP = N-acetyl-L-glutamyl 5-phosphate + ADP. It participates in amino-acid biosynthesis; L-arginine biosynthesis; N(2)-acetyl-L-ornithine from L-glutamate: step 2/4. Its function is as follows. Catalyzes the ATP-dependent phosphorylation of N-acetyl-L-glutamate. This chain is Acetylglutamate kinase, found in Rhizobium etli (strain CIAT 652).